Consider the following 211-residue polypeptide: Protein-L-isoaspartate O-methyltransferase (211 aa).

Ser-60 is an active-site residue.

Belongs to the methyltransferase superfamily. L-isoaspartyl/D-aspartyl protein methyltransferase family.

The protein localises to the cytoplasm. The catalysed reaction is [protein]-L-isoaspartate + S-adenosyl-L-methionine = [protein]-L-isoaspartate alpha-methyl ester + S-adenosyl-L-homocysteine. Catalyzes the methyl esterification of L-isoaspartyl residues in peptides and proteins that result from spontaneous decomposition of normal L-aspartyl and L-asparaginyl residues. It plays a role in the repair and/or degradation of damaged proteins. The sequence is that of Protein-L-isoaspartate O-methyltransferase from Pseudomonas fluorescens (strain ATCC BAA-477 / NRRL B-23932 / Pf-5).